A 339-amino-acid polypeptide reads, in one-letter code: Uracil nucleotide/cysteinyl leukotriene receptor (339 aa).

Residues 1–36 (MNGLEAALPSLTDNSSLAYSEQCGQETPLENMLFAC) lie on the Extracellular side of the membrane. The N-linked (GlcNAc...) asparagine glycan is linked to Asn-14. Residues 37-57 (FYLLDFILAFVGNALALWLFI) form a helical membrane-spanning segment. Residues 58–64 (WDHKSGT) lie on the Cytoplasmic side of the membrane. Residues 65-85 (PANVFLMHLAVADLSCVLVLP) traverse the membrane as a helical segment. At 86-105 (TRLVYHFSGNHWPFGEIPCR) the chain is on the extracellular side. Cys-104 and Cys-181 form a disulfide bridge. The chain crosses the membrane as a helical span at residues 106 to 126 (LTGFLFYLNMYASIYFLTCIS). At 127 to 147 (ADRFLAIVHPVKSLKLRRPLY) the chain is on the cytoplasmic side. A helical membrane pass occupies residues 148–168 (AHLACAFLWIVVAVAMAPLLV). The Extracellular portion of the chain corresponds to 169-195 (SPQTVQTNHTVVCLQLYREKASHHALA). The N-linked (GlcNAc...) asparagine glycan is linked to Asn-176. Residues 196-216 (SLAVAFTFPFITTVTCYLLII) form a helical membrane-spanning segment. Residues 217–232 (RSLRQGPRIEKHLKNK) are Cytoplasmic-facing. A helical membrane pass occupies residues 233-253 (AVRMIAMVLAIFLICFVPYHI). Over 254 to 280 (HRSVYVLHYRGGGTSCAAQRALALGNR) the chain is Extracellular. The chain crosses the membrane as a helical span at residues 281–301 (ITSCLTSLNGALDPVMYFFVA). The Cytoplasmic segment spans residues 302–339 (EKFRHALCNLLCSKRLTGPPPSFEGKTNESSLSARSEL).

Belongs to the G-protein coupled receptor 1 family.

The protein localises to the cell membrane. Functionally, dual specificity receptor for uracil nucleotides and cysteinyl leukotrienes (CysLTs). Signals through G(i) and inhibition of adenylyl cyclase. May mediate brain damage by nucleotides and CysLTs following ischemia. The polypeptide is Uracil nucleotide/cysteinyl leukotriene receptor (Mus musculus (Mouse)).